A 382-amino-acid chain; its full sequence is Guanylate kinase 1 (382 aa).

The Guanylate kinase-like domain maps to 128 to 310 (QKPIVISGPS…CYENLKKLLS (183 aa)). 135–142 (GPSGVGKG) is an ATP binding site. Active-site residues include Arg-168, Arg-261, and Arg-272. ATP-binding residues include Asn-295 and Asp-296.

Belongs to the guanylate kinase family. As to quaternary structure, monomer.

The protein resides in the cytoplasm. It is found in the nucleus. The catalysed reaction is GMP + ATP = GDP + ADP. In terms of biological role, essential for recycling GMP and indirectly, cGMP. The sequence is that of Guanylate kinase 1 (GK1) from Oryza sativa subsp. japonica (Rice).